Consider the following 353-residue polypeptide: Phosphoribosylformylglycinamidine cyclo-ligase (353 aa).

It belongs to the AIR synthase family.

The protein localises to the cytoplasm. It catalyses the reaction 2-formamido-N(1)-(5-O-phospho-beta-D-ribosyl)acetamidine + ATP = 5-amino-1-(5-phospho-beta-D-ribosyl)imidazole + ADP + phosphate + H(+). Its pathway is purine metabolism; IMP biosynthesis via de novo pathway; 5-amino-1-(5-phospho-D-ribosyl)imidazole from N(2)-formyl-N(1)-(5-phospho-D-ribosyl)glycinamide: step 2/2. The chain is Phosphoribosylformylglycinamidine cyclo-ligase from Magnetococcus marinus (strain ATCC BAA-1437 / JCM 17883 / MC-1).